Consider the following 619-residue polypeptide: 1-deoxy-D-xylulose-5-phosphate synthase (619 aa).

Residues His80 and 121 to 123 (GHS) each bind thiamine diphosphate. A Mg(2+)-binding site is contributed by Asp152. Thiamine diphosphate-binding positions include 153–154 (GA), Asn181, Tyr288, and Glu370. Asn181 contributes to the Mg(2+) binding site.

Belongs to the transketolase family. DXPS subfamily. In terms of assembly, homodimer. Mg(2+) is required as a cofactor. Thiamine diphosphate serves as cofactor.

The catalysed reaction is D-glyceraldehyde 3-phosphate + pyruvate + H(+) = 1-deoxy-D-xylulose 5-phosphate + CO2. The protein operates within metabolic intermediate biosynthesis; 1-deoxy-D-xylulose 5-phosphate biosynthesis; 1-deoxy-D-xylulose 5-phosphate from D-glyceraldehyde 3-phosphate and pyruvate: step 1/1. Its function is as follows. Catalyzes the acyloin condensation reaction between C atoms 2 and 3 of pyruvate and glyceraldehyde 3-phosphate to yield 1-deoxy-D-xylulose-5-phosphate (DXP). This chain is 1-deoxy-D-xylulose-5-phosphate synthase, found in Yersinia pseudotuberculosis serotype O:3 (strain YPIII).